Here is a 158-residue protein sequence, read N- to C-terminus: 6,7-dimethyl-8-ribityllumazine synthase (158 aa).

Residues Phe-23, 57 to 59, and 81 to 83 contribute to the 5-amino-6-(D-ribitylamino)uracil site; these read AFE and TVI. 86 to 87 provides a ligand contact to (2S)-2-hydroxy-3-oxobutyl phosphate; that stretch reads GT. His-89 serves as the catalytic Proton donor. Phe-114 is a binding site for 5-amino-6-(D-ribitylamino)uracil. Arg-128 lines the (2S)-2-hydroxy-3-oxobutyl phosphate pocket.

It belongs to the DMRL synthase family.

The catalysed reaction is (2S)-2-hydroxy-3-oxobutyl phosphate + 5-amino-6-(D-ribitylamino)uracil = 6,7-dimethyl-8-(1-D-ribityl)lumazine + phosphate + 2 H2O + H(+). Its pathway is cofactor biosynthesis; riboflavin biosynthesis; riboflavin from 2-hydroxy-3-oxobutyl phosphate and 5-amino-6-(D-ribitylamino)uracil: step 1/2. Catalyzes the formation of 6,7-dimethyl-8-ribityllumazine by condensation of 5-amino-6-(D-ribitylamino)uracil with 3,4-dihydroxy-2-butanone 4-phosphate. This is the penultimate step in the biosynthesis of riboflavin. This is 6,7-dimethyl-8-ribityllumazine synthase from Desulforudis audaxviator (strain MP104C).